The sequence spans 260 residues: Flap endonuclease Xni (260 aa).

Mg(2+) is bound at residue aspartate 104. Residues 160–250 form the 5'-3' exonuclease domain; sequence VSPQQLTDYW…NGNLQQLRLP (91 aa). Leucine 171, alanine 172, proline 180, valine 182, and isoleucine 185 together coordinate K(+). The segment at 184-189 is interaction with DNA; sequence GIGPKS.

The protein belongs to the Xni family. Requires Mg(2+) as cofactor. K(+) is required as a cofactor.

In terms of biological role, has flap endonuclease activity. During DNA replication, flap endonucleases cleave the 5'-overhanging flap structure that is generated by displacement synthesis when DNA polymerase encounters the 5'-end of a downstream Okazaki fragment. The chain is Flap endonuclease Xni from Pectobacterium atrosepticum (strain SCRI 1043 / ATCC BAA-672) (Erwinia carotovora subsp. atroseptica).